We begin with the raw amino-acid sequence, 650 residues long: 1-deoxy-D-xylulose-5-phosphate synthase (650 aa).

A compositionally biased stretch (basic and acidic residues) spans 1 to 13 (MSKIKNDKRETGH). The segment at 1–23 (MSKIKNDKRETGHLKSPPETPLL) is disordered. Residues His-92 and 133 to 135 (AHS) contribute to the thiamine diphosphate site. Asp-164 provides a ligand contact to Mg(2+). Thiamine diphosphate contacts are provided by residues 165 to 166 (GA), Asn-193, Tyr-302, and Glu-384. Asn-193 is a Mg(2+) binding site.

Belongs to the transketolase family. DXPS subfamily. As to quaternary structure, homodimer. The cofactor is Mg(2+). Thiamine diphosphate serves as cofactor.

It catalyses the reaction D-glyceraldehyde 3-phosphate + pyruvate + H(+) = 1-deoxy-D-xylulose 5-phosphate + CO2. Its pathway is metabolic intermediate biosynthesis; 1-deoxy-D-xylulose 5-phosphate biosynthesis; 1-deoxy-D-xylulose 5-phosphate from D-glyceraldehyde 3-phosphate and pyruvate: step 1/1. Functionally, catalyzes the acyloin condensation reaction between C atoms 2 and 3 of pyruvate and glyceraldehyde 3-phosphate to yield 1-deoxy-D-xylulose-5-phosphate (DXP). This is 1-deoxy-D-xylulose-5-phosphate synthase from Chelativorans sp. (strain BNC1).